Consider the following 117-residue polypeptide: Large ribosomal subunit protein bL20 (117 aa).

This sequence belongs to the bacterial ribosomal protein bL20 family.

Its function is as follows. Binds directly to 23S ribosomal RNA and is necessary for the in vitro assembly process of the 50S ribosomal subunit. It is not involved in the protein synthesizing functions of that subunit. The polypeptide is Large ribosomal subunit protein bL20 (Leptospira biflexa serovar Patoc (strain Patoc 1 / Ames)).